The chain runs to 190 residues: B3 domain-containing protein Os02g0764100 (190 aa).

Residues 17–121 (FEKAVTPSDV…KLLFIDCKKN (105 aa)) constitute a DNA-binding region (TF-B3).

The protein resides in the nucleus. The chain is B3 domain-containing protein Os02g0764100 from Oryza sativa subsp. japonica (Rice).